Consider the following 225-residue polypeptide: NAD(P)H-quinone oxidoreductase subunit K, chloroplastic (225 aa).

Residues C43, C44, C108, and C139 each contribute to the [4Fe-4S] cluster site.

It belongs to the complex I 20 kDa subunit family. As to quaternary structure, NDH is composed of at least 16 different subunits, 5 of which are encoded in the nucleus. The cofactor is [4Fe-4S] cluster.

It localises to the plastid. Its subcellular location is the chloroplast thylakoid membrane. The catalysed reaction is a plastoquinone + NADH + (n+1) H(+)(in) = a plastoquinol + NAD(+) + n H(+)(out). The enzyme catalyses a plastoquinone + NADPH + (n+1) H(+)(in) = a plastoquinol + NADP(+) + n H(+)(out). In terms of biological role, NDH shuttles electrons from NAD(P)H:plastoquinone, via FMN and iron-sulfur (Fe-S) centers, to quinones in the photosynthetic chain and possibly in a chloroplast respiratory chain. The immediate electron acceptor for the enzyme in this species is believed to be plastoquinone. Couples the redox reaction to proton translocation, and thus conserves the redox energy in a proton gradient. The protein is NAD(P)H-quinone oxidoreductase subunit K, chloroplastic of Barbarea verna (Land cress).